The sequence spans 322 residues: NADH-quinone oxidoreductase subunit H (322 aa).

Helical transmembrane passes span 15 to 35, 81 to 101, 114 to 134, 149 to 169, 184 to 204, 237 to 257, 265 to 285, and 299 to 319; these read IFQSIVILVCVLITASIMSVV, ITFLIAPILAFISLLLVITII, IGVLFFLMMASLSVYSVLLAG, ATAQTLSYEVFLGLSCMGVVA, IGLWNIIPQFFGFLAFFIAGL, FFIGEYISIIVVSSLISTMFF, FPSYFWFILKTLCFMMIFILI, and LFGWKVCFPLTLINLIFTALI.

The protein belongs to the complex I subunit 1 family. As to quaternary structure, NDH-1 is composed of 13 different subunits. Subunits NuoA, H, J, K, L, M, N constitute the membrane sector of the complex.

The protein localises to the cell membrane. The enzyme catalyses a quinone + NADH + 5 H(+)(in) = a quinol + NAD(+) + 4 H(+)(out). Its function is as follows. NDH-1 shuttles electrons from NADH, via FMN and iron-sulfur (Fe-S) centers, to quinones in the respiratory chain. The immediate electron acceptor for the enzyme in this species is believed to be ubiquinone. Couples the redox reaction to proton translocation (for every two electrons transferred, four hydrogen ions are translocated across the cytoplasmic membrane), and thus conserves the redox energy in a proton gradient. This subunit may bind ubiquinone. The chain is NADH-quinone oxidoreductase subunit H from Buchnera aphidicola subsp. Baizongia pistaciae (strain Bp).